Reading from the N-terminus, the 1044-residue chain is Isoleucine--tRNA ligase (1044 aa).

A 'HIGH' region motif is present at residues 48 to 58 (PFATGLPHFGH). The short motif at 594-598 (KMSKS) is the 'KMSKS' region element. Residue Lys-597 participates in ATP binding.

The protein belongs to the class-I aminoacyl-tRNA synthetase family. IleS type 2 subfamily. Monomer. Zn(2+) serves as cofactor.

It is found in the cytoplasm. The catalysed reaction is tRNA(Ile) + L-isoleucine + ATP = L-isoleucyl-tRNA(Ile) + AMP + diphosphate. Catalyzes the attachment of isoleucine to tRNA(Ile). As IleRS can inadvertently accommodate and process structurally similar amino acids such as valine, to avoid such errors it has two additional distinct tRNA(Ile)-dependent editing activities. One activity is designated as 'pretransfer' editing and involves the hydrolysis of activated Val-AMP. The other activity is designated 'posttransfer' editing and involves deacylation of mischarged Val-tRNA(Ile). The protein is Isoleucine--tRNA ligase of Borrelia duttonii (strain Ly).